A 130-amino-acid chain; its full sequence is Small ribosomal subunit protein uS11c (130 aa).

It belongs to the universal ribosomal protein uS11 family. In terms of assembly, part of the 30S ribosomal subunit.

It localises to the plastid. Its subcellular location is the chloroplast. This is Small ribosomal subunit protein uS11c from Tupiella akineta (Green alga).